The chain runs to 122 residues: Large ribosomal subunit protein uL14 (122 aa).

This sequence belongs to the universal ribosomal protein uL14 family. In terms of assembly, part of the 50S ribosomal subunit. Forms a cluster with proteins L3 and L19. In the 70S ribosome, L14 and L19 interact and together make contacts with the 16S rRNA in bridges B5 and B8.

Binds to 23S rRNA. Forms part of two intersubunit bridges in the 70S ribosome. In Synechococcus sp. (strain JA-3-3Ab) (Cyanobacteria bacterium Yellowstone A-Prime), this protein is Large ribosomal subunit protein uL14.